Consider the following 400-residue polypeptide: U-box domain-containing protein 37 (400 aa).

The stretch at 229 to 298 forms a coiled coil; the sequence is KEWESAYLEE…RKAKEERDLL (70 aa). The U-box domain maps to 324 to 398; that stretch reads EAPQYFICPI…QEWLHASSSF (75 aa).

It catalyses the reaction S-ubiquitinyl-[E2 ubiquitin-conjugating enzyme]-L-cysteine + [acceptor protein]-L-lysine = [E2 ubiquitin-conjugating enzyme]-L-cysteine + N(6)-ubiquitinyl-[acceptor protein]-L-lysine.. The protein operates within protein modification; protein ubiquitination. Functionally, functions as an E3 ubiquitin ligase. This chain is U-box domain-containing protein 37 (PUB37), found in Arabidopsis thaliana (Mouse-ear cress).